The sequence spans 339 residues: Dihydroorotate dehydrogenase (quinone) (339 aa).

FMN-binding positions include 62 to 66 (AGMDK) and threonine 86. Lysine 66 contributes to the substrate binding site. Position 111 to 115 (111 to 115 (NRMGF)) interacts with substrate. Positions 139 and 172 each coordinate FMN. Substrate is bound at residue asparagine 172. Serine 175 (nucleophile) is an active-site residue. Asparagine 177 lines the substrate pocket. Residues lysine 217 and threonine 245 each coordinate FMN. Substrate is bound at residue 246-247 (NT). Residues glycine 268, glycine 297, and 318–319 (YS) contribute to the FMN site.

Belongs to the dihydroorotate dehydrogenase family. Type 2 subfamily. In terms of assembly, monomer. FMN is required as a cofactor.

The protein localises to the cell membrane. The catalysed reaction is (S)-dihydroorotate + a quinone = orotate + a quinol. It functions in the pathway pyrimidine metabolism; UMP biosynthesis via de novo pathway; orotate from (S)-dihydroorotate (quinone route): step 1/1. Catalyzes the conversion of dihydroorotate to orotate with quinone as electron acceptor. This chain is Dihydroorotate dehydrogenase (quinone), found in Shewanella putrefaciens (strain CN-32 / ATCC BAA-453).